A 972-amino-acid polypeptide reads, in one-letter code: Mast/stem cell growth factor receptor Kit (972 aa).

Residues methionine 1–serine 25 form the signal peptide. Residues glutamine 26–proline 520 are Extracellular-facing. Ig-like C2-type domains lie at proline 27 to arginine 112, aspartate 121 to arginine 205, proline 212 to valine 308, proline 317 to asparagine 410, and proline 413 to alanine 507. Intrachain disulfides connect cysteine 58–cysteine 97, cysteine 136–cysteine 186, cysteine 151–cysteine 183, and cysteine 233–cysteine 290. Asparagine 94 and asparagine 145 each carry an N-linked (GlcNAc...) asparagine glycan. N-linked (GlcNAc...) asparagine glycosylation is found at asparagine 283, asparagine 293, asparagine 300, asparagine 320, asparagine 352, asparagine 367, asparagine 400, asparagine 463, and asparagine 486. Cysteine 428 and cysteine 491 are disulfide-bonded. The helical transmembrane segment at leucine 521–tyrosine 541 threads the bilayer. Over lysine 542–valine 972 the chain is Cytoplasmic. 4 positions are modified to phosphotyrosine; by autocatalysis: tyrosine 543, tyrosine 549, tyrosine 564, and tyrosine 566. Tyrosine 564 provides a ligand contact to Mg(2+). The important for interaction with phosphotyrosine-binding proteins stretch occupies residues tyrosine 564–tyrosine 566. In terms of domain architecture, Protein kinase spans leucine 585–serine 933. ATP contacts are provided by residues glycine 592 to valine 599, lysine 619, and glutamate 667 to aspartate 673. 3 positions are modified to phosphotyrosine; by autocatalysis: tyrosine 699, tyrosine 717, and tyrosine 726. Phosphoserine; by PKC/PRKCA occurs at positions 737 and 742. Aspartate 788 acts as the Proton acceptor in catalysis. Residue arginine 792 coordinates ATP. Residues asparagine 793 and aspartate 806 each coordinate Mg(2+). A Phosphoserine modification is found at serine 817. Residue tyrosine 819 is modified to Phosphotyrosine; by autocatalysis. Serine 887 carries the post-translational modification Phosphoserine. Tyrosine 896 and tyrosine 932 each carry phosphotyrosine; by autocatalysis. Serine 955 bears the Phosphoserine mark.

Belongs to the protein kinase superfamily. Tyr protein kinase family. CSF-1/PDGF receptor subfamily. Monomer in the absence of bound KITLG/SCF. Homodimer in the presence of bound KITLG/SCF, forming a heterotetramer with two KITLG/SCF molecules. Interacts (via phosphorylated tyrosine residues) with the adapter proteins GRB2 and GRB7 (via SH2 domain), and SH2B2/APS. Interacts (via C-terminus) with MPDZ (via the tenth PDZ domain). Interacts (via phosphorylated tyrosine residues) with PIK3R1 and PIK3 catalytic subunit. Interacts (via phosphorylated tyrosine) with CRK (isoform Crk-II), FYN, SHC1 and MATK/CHK (via SH2 domain). Interacts with LYN and FES/FPS. Interacts (via phosphorylated tyrosine residues) with the protein phosphatases PTPN6/SHP-1 (via SH2 domain), PTPN11/SHP-2 (via SH2 domain) and PTPRU. Interacts with PLCG1. Interacts with DOK1 and TEC. Interacts with IL1RAP (independent of stimulation with KITLG/SCF). A mast cell-specific KITLG/SCF-induced interleukin-33 signaling complex contains IL1RL1, IL1RAP, KIT and MYD88. In terms of processing, ubiquitinated by SOCS6. KIT is rapidly ubiquitinated after autophosphorylation induced by KITLG/SCF binding, leading to internalization and degradation. Post-translationally, autophosphorylated on tyrosine residues. KITLG/SCF binding promotes autophosphorylation. Phosphorylated tyrosine residues are important for interaction with specific binding partners.

The protein localises to the cell membrane. It catalyses the reaction L-tyrosyl-[protein] + ATP = O-phospho-L-tyrosyl-[protein] + ADP + H(+). Present in an inactive conformation in the absence of bound ligand. KITLG/SCF binding leads to dimerization and activation by autophosphorylation on tyrosine residues. Activity is down-regulated by PRKCA-mediated phosphorylation on serine residues. In terms of biological role, tyrosine-protein kinase that acts as a cell-surface receptor for the cytokine KITLG/SCF and plays an essential role in the regulation of cell survival and proliferation, hematopoiesis, stem cell maintenance, gametogenesis, mast cell development, migration and function, and in melanogenesis. In response to KITLG/SCF binding, KIT can activate several signaling pathways. Phosphorylates PIK3R1, PLCG1, SH2B2/APS and CBL. Activates the AKT1 signaling pathway by phosphorylation of PIK3R1, the regulatory subunit of phosphatidylinositol 3-kinase. Activated KIT also transmits signals via GRB2 and activation of RAS, RAF1 and the MAP kinases MAPK1/ERK2 and/or MAPK3/ERK1. Promotes activation of STAT family members STAT1, STAT3, STAT5A and STAT5B. Activation of PLCG1 leads to the production of the cellular signaling molecules diacylglycerol and inositol 1,4,5-trisphosphate. KIT signaling is modulated by protein phosphatases, and by rapid internalization and degradation of the receptor. Activated KIT promotes phosphorylation of the protein phosphatases PTPN6/SHP-1 and PTPRU, and of the transcription factors STAT1, STAT3, STAT5A and STAT5B. Promotes phosphorylation of PIK3R1, CBL, CRK (isoform Crk-II), LYN, MAPK1/ERK2 and/or MAPK3/ERK1, PLCG1, SRC and SHC1. The sequence is that of Mast/stem cell growth factor receptor Kit (KIT) from Sus scrofa (Pig).